The primary structure comprises 206 residues: GTP cyclohydrolase 1 (206 aa).

Positions 98, 101, and 169 each coordinate Zn(2+).

This sequence belongs to the GTP cyclohydrolase I family. In terms of assembly, toroid-shaped homodecamer, composed of two pentamers of five dimers.

The catalysed reaction is GTP + H2O = 7,8-dihydroneopterin 3'-triphosphate + formate + H(+). It participates in cofactor biosynthesis; 7,8-dihydroneopterin triphosphate biosynthesis; 7,8-dihydroneopterin triphosphate from GTP: step 1/1. The polypeptide is GTP cyclohydrolase 1 (Helicobacter hepaticus (strain ATCC 51449 / 3B1)).